The chain runs to 373 residues: SH3 domain-binding protein 5-like (373 aa).

The disordered stretch occupies residues 1–53; sequence MEGKEGPSCEVRLPTPGAEREGPIHPELGAFGETASNTIKLSESSNDGKKEEI. The span at 34 to 45 shows a compositional bias: polar residues; that stretch reads TASNTIKLSESS. 2 coiled-coil regions span residues 55–98 and 170–272; these read EELD…ESAR and WQEM…SEEI. Disordered stretches follow at residues 276 to 305 and 344 to 373; these read RTQS…TGPP and TGAV…SVSL. Over residues 344–358 the composition is skewed to basic and acidic residues; the sequence is TGAVECGGSRERGGD.

This sequence belongs to the SH3BP5 family.

In terms of biological role, functions as a guanine nucleotide exchange factor (GEF) for rab11a. The polypeptide is SH3 domain-binding protein 5-like (sh3bp5l) (Xenopus tropicalis (Western clawed frog)).